We begin with the raw amino-acid sequence, 383 residues long: S-adenosylmethionine synthase (383 aa).

Residue His-15 participates in ATP binding. Asp-17 is a binding site for Mg(2+). Glu-43 contributes to the K(+) binding site. L-methionine-binding residues include Glu-56 and Gln-99. Residues 99 to 109 (QSQDINQGVDR) are flexible loop. ATP is bound by residues 164–166 (DAK), 230–231 (RF), Asp-239, 245–246 (RK), Ala-262, and Lys-266. Asp-239 contacts L-methionine. L-methionine is bound at residue Lys-270.

The protein belongs to the AdoMet synthase family. In terms of assembly, homotetramer; dimer of dimers. Mg(2+) is required as a cofactor. It depends on K(+) as a cofactor.

Its subcellular location is the cytoplasm. It catalyses the reaction L-methionine + ATP + H2O = S-adenosyl-L-methionine + phosphate + diphosphate. It participates in amino-acid biosynthesis; S-adenosyl-L-methionine biosynthesis; S-adenosyl-L-methionine from L-methionine: step 1/1. Its function is as follows. Catalyzes the formation of S-adenosylmethionine (AdoMet) from methionine and ATP. The overall synthetic reaction is composed of two sequential steps, AdoMet formation and the subsequent tripolyphosphate hydrolysis which occurs prior to release of AdoMet from the enzyme. In Actinobacillus succinogenes (strain ATCC 55618 / DSM 22257 / CCUG 43843 / 130Z), this protein is S-adenosylmethionine synthase.